Reading from the N-terminus, the 898-residue chain is DNA damage-induced apoptosis suppressor protein (898 aa).

Disordered stretches follow at residues 191–210 (CGSQ…DSDL), 643–670 (SINT…HEGS), and 710–749 (YPIN…FEES). 2 stretches are compositionally biased toward polar residues: residues 643-664 (SINT…PSSS) and 710-725 (YPIN…KPSL). Residues 726-741 (QSISPSRYSRPRSQSD) are compositionally biased toward low complexity.

In terms of tissue distribution, highly expressed in the testis, spleen and heart. Expressed at high levels in the primary spermatocytes and to a lesser extent in the round spermatids. Also found in the bone marrow, brain, lung, kidney and liver.

The protein localises to the cytoplasm. The protein resides in the nucleus. Its function is as follows. May be an anti-apoptotic protein involved in DNA repair or cell survival. This Mus musculus (Mouse) protein is DNA damage-induced apoptosis suppressor protein (Ddias).